Reading from the N-terminus, the 160-residue chain is NAD(P)H-quinone oxidoreductase subunit I, chloroplastic (160 aa).

4Fe-4S ferredoxin-type domains are found at residues 55–84 (GRIH…VDWK) and 95–124 (LNYS…MTEE). [4Fe-4S] cluster contacts are provided by C64, C67, C70, C74, C104, C107, C110, and C114.

The protein belongs to the complex I 23 kDa subunit family. NDH is composed of at least 16 different subunits, 5 of which are encoded in the nucleus. The cofactor is [4Fe-4S] cluster.

It is found in the plastid. Its subcellular location is the chloroplast thylakoid membrane. It catalyses the reaction a plastoquinone + NADH + (n+1) H(+)(in) = a plastoquinol + NAD(+) + n H(+)(out). The enzyme catalyses a plastoquinone + NADPH + (n+1) H(+)(in) = a plastoquinol + NADP(+) + n H(+)(out). Functionally, NDH shuttles electrons from NAD(P)H:plastoquinone, via FMN and iron-sulfur (Fe-S) centers, to quinones in the photosynthetic chain and possibly in a chloroplast respiratory chain. The immediate electron acceptor for the enzyme in this species is believed to be plastoquinone. Couples the redox reaction to proton translocation, and thus conserves the redox energy in a proton gradient. The protein is NAD(P)H-quinone oxidoreductase subunit I, chloroplastic of Cucumis sativus (Cucumber).